The sequence spans 310 residues: DNA repair nuclease APEX1 (310 aa).

Residues 1-51 (MPKRAKKNEEGVDGEADNGTAAAKKEKKGKEPEAPILYEDPPEKLTSKDGR) are disordered. Residues 41–51 (PPEKLTSKDGR) show a composition bias toward basic and acidic residues. Mg(2+) contacts are provided by aspartate 63 and glutamate 89. The active site involves tyrosine 164. Aspartate 203, asparagine 205, and aspartate 300 together coordinate Mg(2+). The Proton donor/acceptor role is filled by aspartate 203.

Belongs to the DNA repair enzymes AP/ExoA family. Mg(2+) is required as a cofactor. It depends on Mn(2+) as a cofactor.

The protein localises to the nucleus. It is found in the nucleolus. Its subcellular location is the nucleus speckle. The protein resides in the endoplasmic reticulum. It localises to the cytoplasm. The protein localises to the mitochondrion. The catalysed reaction is Exonucleolytic cleavage in the 3'- to 5'-direction to yield nucleoside 5'-phosphates.. Functions as an apurinic/apyrimidinic (AP) endodeoxyribonuclease in the DNA base excision repair (BER) pathway of DNA lesions induced by oxidative and alkylating agents. Initiates repair of AP sites in DNA by catalyzing hydrolytic incision of the phosphodiester backbone immediately adjacent to the damage, generating a single-strand break with 5'-deoxyribose phosphate and 3'-hydroxyl ends. Has 3'-5' exoribonuclease activity on mismatched deoxyribonucleotides at the 3' termini of nicked or gapped DNA molecules during short-patch BER. May also play a role in the epigenetic regulation of gene expression by participating in DNA demethylation. Required for passage through the mid-blastula transition MBT. May also act as an endoribonuclease involved in the control of single-stranded RNA metabolism. Has no redox activity. Binds DNA and RNA. This is DNA repair nuclease APEX1 (apex1) from Danio rerio (Zebrafish).